The primary structure comprises 459 residues: Cysteine--tRNA ligase (459 aa).

Cys28 serves as a coordination point for Zn(2+). Residues 30 to 40 carry the 'HIGH' region motif; it reads ITIYDLCHIGH. Residues Cys209, His234, and Glu238 each coordinate Zn(2+). The short motif at 266–270 is the 'KMSKS' region element; sequence KMSKS. Residue Lys269 participates in ATP binding.

It belongs to the class-I aminoacyl-tRNA synthetase family. Monomer. It depends on Zn(2+) as a cofactor.

The protein resides in the cytoplasm. It carries out the reaction tRNA(Cys) + L-cysteine + ATP = L-cysteinyl-tRNA(Cys) + AMP + diphosphate. This chain is Cysteine--tRNA ligase, found in Shewanella sediminis (strain HAW-EB3).